The sequence spans 315 residues: MGRHRRGRDIHGVLLLDKPQDISSNDALQKVKRIFNASKAGHTGALDPLATGMLPVCLGEATKFSQFLLDSDKRYRVIARLGQRTDTSDSHGQIISERAIQLSQVQLDAALDKFRGDTMQIPSMYSALKYQGKPLYEYARQGIEVEREARPITVYELQFIRWENDELELEIHCSKGTYIRTIIDDLGELLGCGAHVIYLRRLQVANYPNDRMVTLEQLYELQKQAKDQEIPVGELIDSLLLPMDSAIAHFPEVNLIPVVAAYFKQGQAVRSAKSPALVESMVRVTEGDERKFIGIAVINDDGLVAPRRLVVESRD.

A substrate-binding site is contributed by His-42. The active-site Nucleophile is Asp-47. Residues Tyr-75, Tyr-178, and Leu-199 each contribute to the substrate site.

It belongs to the pseudouridine synthase TruB family. Type 1 subfamily.

It catalyses the reaction uridine(55) in tRNA = pseudouridine(55) in tRNA. Functionally, responsible for synthesis of pseudouridine from uracil-55 in the psi GC loop of transfer RNAs. This chain is tRNA pseudouridine synthase B, found in Photorhabdus laumondii subsp. laumondii (strain DSM 15139 / CIP 105565 / TT01) (Photorhabdus luminescens subsp. laumondii).